We begin with the raw amino-acid sequence, 140 residues long: Nucleoside diphosphate kinase (140 aa).

K11, F59, R87, T93, R104, and N114 together coordinate ATP. The active-site Pros-phosphohistidine intermediate is H117.

Belongs to the NDK family. As to quaternary structure, homotetramer. Requires Mg(2+) as cofactor.

Its subcellular location is the cytoplasm. The enzyme catalyses a 2'-deoxyribonucleoside 5'-diphosphate + ATP = a 2'-deoxyribonucleoside 5'-triphosphate + ADP. It carries out the reaction a ribonucleoside 5'-diphosphate + ATP = a ribonucleoside 5'-triphosphate + ADP. In terms of biological role, major role in the synthesis of nucleoside triphosphates other than ATP. The ATP gamma phosphate is transferred to the NDP beta phosphate via a ping-pong mechanism, using a phosphorylated active-site intermediate. The protein is Nucleoside diphosphate kinase of Rhizobium rhizogenes (strain K84 / ATCC BAA-868) (Agrobacterium radiobacter).